Reading from the N-terminus, the 363-residue chain is Phosphoserine aminotransferase (363 aa).

Residue Arg42 coordinates L-glutamate. Pyridoxal 5'-phosphate contacts are provided by Trp105, Thr155, Asp175, and Gln198. N6-(pyridoxal phosphate)lysine is present on Lys199. 240 to 241 (NT) contributes to the pyridoxal 5'-phosphate binding site.

This sequence belongs to the class-V pyridoxal-phosphate-dependent aminotransferase family. SerC subfamily. In terms of assembly, homodimer. Requires pyridoxal 5'-phosphate as cofactor.

The protein resides in the cytoplasm. The enzyme catalyses O-phospho-L-serine + 2-oxoglutarate = 3-phosphooxypyruvate + L-glutamate. It catalyses the reaction 4-(phosphooxy)-L-threonine + 2-oxoglutarate = (R)-3-hydroxy-2-oxo-4-phosphooxybutanoate + L-glutamate. It functions in the pathway amino-acid biosynthesis; L-serine biosynthesis; L-serine from 3-phospho-D-glycerate: step 2/3. Its pathway is cofactor biosynthesis; pyridoxine 5'-phosphate biosynthesis; pyridoxine 5'-phosphate from D-erythrose 4-phosphate: step 3/5. Catalyzes the reversible conversion of 3-phosphohydroxypyruvate to phosphoserine and of 3-hydroxy-2-oxo-4-phosphonooxybutanoate to phosphohydroxythreonine. This Herminiimonas arsenicoxydans protein is Phosphoserine aminotransferase.